Here is a 652-residue protein sequence, read N- to C-terminus: Maternal embryonic leucine zipper kinase (652 aa).

Positions 13–265 (YELHETIGTG…VKHLLSHPWL (253 aa)) constitute a Protein kinase domain. ATP contacts are provided by residues 19-27 (IGTGGFAKV) and Lys42. The active-site Proton acceptor is Asp134. Thr169 bears the Phosphothreonine; by autocatalysis mark. Ser173 carries the phosphoserine; by autocatalysis modification. Residues 284-323 (VDEDCVTELSVFYKCSRTSTSRLISEWNYDHITASYLLLH) are UBA-like. The interval 328–652 (HGKPVRLKRP…VEDILSSCKV (325 aa)) is autoinhibitory region. Phosphothreonine is present on residues Thr415, Thr450, Thr452, Thr482, and Thr484. The segment at 443–492 (FLHPAPWTPTPRRKQNEKKGILTTPNKNSHTKEKNQSKETPTKKPITTGE) is disordered. A compositionally biased stretch (basic and acidic residues) spans 472–484 (HTKEKNQSKETPT). Phosphoserine is present on residues Ser499, Ser506, and Ser518. The 50-residue stretch at 603–652 (SDFGKVTMQFELEVCQLSKSEMVGIRRQRLKGDAWVYKRLVEDILSSCKV) folds into the KA1 domain.

It belongs to the protein kinase superfamily. CAMK Ser/Thr protein kinase family. SNF1 subfamily. Post-translationally, autophosphorylated: autophosphorylation of the T-loop at Thr-169 and Ser-173 is required for activation. Phosphorylated by the maturation promoting factor (MPF), composed of cdk1 and a cyclin-B. Also phosphorylated by some MAPK. Phosphorylated during oocyte maturation. Dephosphorylation destabilizes the protein. Degraded when cells exit mitosis.

The protein localises to the cell membrane. It catalyses the reaction L-seryl-[protein] + ATP = O-phospho-L-seryl-[protein] + ADP + H(+). The catalysed reaction is L-threonyl-[protein] + ATP = O-phospho-L-threonyl-[protein] + ADP + H(+). Its activity is regulated as follows. Activated by autophosphorylation of the T-loop at Thr-169 and Ser-173: in contrast to other members of the SNF1 subfamily, phosphorylation at Thr-169 is not mediated by STK11/LKB1 but via autophosphorylation instead. Serine/threonine-protein kinase involved in various processes such as cell cycle regulation, self-renewal of stem cells, apoptosis and splicing regulation. Also plays a role in primitive hematopoiesis, possibly by affecting the expression of genes critical for hematopoiesis. Plays a role in cytokinesis during early development. In Xenopus tropicalis (Western clawed frog), this protein is Maternal embryonic leucine zipper kinase (melk).